The sequence spans 466 residues: Ribulose bisphosphate carboxylase/oxygenase activase, chloroplastic (466 aa).

A chloroplast-targeting transit peptide spans 1–48; it reads MAAAFSSTVGAPASTPTNFLGKKLKKQVTSAVNYHGKSSNINRFKVMA. 156-163 provides a ligand contact to ATP; it reads GGKGQGKS. The segment at 429 to 454 is disordered; the sequence is QGAQQAGNLPVPEGCTDPVAKNFDPT.

It belongs to the RuBisCO activase family.

The protein resides in the plastid. It is found in the chloroplast stroma. Functionally, activation of RuBisCO (ribulose-1,5-bisphosphate carboxylase/oxygenase; EC 4.1.1.39) involves the ATP-dependent carboxylation of the epsilon-amino group of lysine leading to a carbamate structure. The polypeptide is Ribulose bisphosphate carboxylase/oxygenase activase, chloroplastic (RCA) (Oryza sativa subsp. japonica (Rice)).